The sequence spans 987 residues: UPF0182 protein Lxx09300 (987 aa).

A run of 7 helical transmembrane segments spans residues 17–37 (VWTTLGVIVALVILFFIFAGL), 59–79 (AAIAMFFVGFLGMALPLWVVI), 108–128 (RLAMYGIPIVFGIFAGVSAAS), 167–187 (VGFASAVVLISLLATLATCYL), 206–226 (VQISVIAAVYLLLQGVSVWLD), 256–276 (AVLAVAAVFVALLFAVTAFTG), and 283–303 (VGTALLIVAALVIGAIYPWAI). Disordered regions lie at residues 700-719 (RDDAWTTPNDPTSSPTDPTL) and 886-947 (TAGD…ALQQ). The segment covering 705–719 (TTPNDPTSSPTDPTL) has biased composition (low complexity). Residues 897–932 (GGSGGGSSGDAGSSAGGGSSGGGGSSAGGSSSGSGS) are compositionally biased toward gly residues. The segment covering 933–947 (SGTQSNAALQRALQQ) has biased composition (low complexity).

The protein belongs to the UPF0182 family.

The protein localises to the cell membrane. The sequence is that of UPF0182 protein Lxx09300 from Leifsonia xyli subsp. xyli (strain CTCB07).